A 323-amino-acid chain; its full sequence is GTP 3',8-cyclase (323 aa).

One can recognise a Radical SAM core domain in the interval 4–233 (KYGREIDYLR…NGPAKYISIE (230 aa)). GTP is bound at residue Arg13. [4Fe-4S] cluster-binding residues include Cys20 and Cys24. Tyr26 provides a ligand contact to S-adenosyl-L-methionine. Cys27 contributes to the [4Fe-4S] cluster binding site. Arg63 is a GTP binding site. Gly67 contacts S-adenosyl-L-methionine. Thr94 lines the GTP pocket. Ser118 serves as a coordination point for S-adenosyl-L-methionine. Residue Lys154 participates in GTP binding. Met188 serves as a coordination point for S-adenosyl-L-methionine. Cys250 and Cys253 together coordinate [4Fe-4S] cluster. 255 to 257 (RIR) is a binding site for GTP. Residue Cys267 participates in [4Fe-4S] cluster binding.

This sequence belongs to the radical SAM superfamily. MoaA family. As to quaternary structure, monomer and homodimer. It depends on [4Fe-4S] cluster as a cofactor.

The catalysed reaction is GTP + AH2 + S-adenosyl-L-methionine = (8S)-3',8-cyclo-7,8-dihydroguanosine 5'-triphosphate + 5'-deoxyadenosine + L-methionine + A + H(+). It functions in the pathway cofactor biosynthesis; molybdopterin biosynthesis. Functionally, catalyzes the cyclization of GTP to (8S)-3',8-cyclo-7,8-dihydroguanosine 5'-triphosphate. In Clostridium perfringens (strain SM101 / Type A), this protein is GTP 3',8-cyclase.